Here is a 492-residue protein sequence, read N- to C-terminus: Ketol-acid reductoisomerase (NADP(+)) (492 aa).

The KARI N-terminal Rossmann domain occupies 15 to 208 (AQLGKCRFMA…GAHRAGVLES (194 aa)). NADP(+) is bound by residues 45–48 (CGAQ), R68, R76, S78, and 108–110 (DKQ). H132 is an active-site residue. G158 contacts NADP(+). KARI C-terminal knotted domains follow at residues 209 to 344 (SFVA…NSPE) and 345 to 485 (YDGK…MTDM). Mg(2+) contacts are provided by D217, E221, E389, and E393. S414 serves as a coordination point for substrate.

Belongs to the ketol-acid reductoisomerase family. Requires Mg(2+) as cofactor.

The catalysed reaction is (2R)-2,3-dihydroxy-3-methylbutanoate + NADP(+) = (2S)-2-acetolactate + NADPH + H(+). It carries out the reaction (2R,3R)-2,3-dihydroxy-3-methylpentanoate + NADP(+) = (S)-2-ethyl-2-hydroxy-3-oxobutanoate + NADPH + H(+). The protein operates within amino-acid biosynthesis; L-isoleucine biosynthesis; L-isoleucine from 2-oxobutanoate: step 2/4. It functions in the pathway amino-acid biosynthesis; L-valine biosynthesis; L-valine from pyruvate: step 2/4. In terms of biological role, involved in the biosynthesis of branched-chain amino acids (BCAA). Catalyzes an alkyl-migration followed by a ketol-acid reduction of (S)-2-acetolactate (S2AL) to yield (R)-2,3-dihydroxy-isovalerate. In the isomerase reaction, S2AL is rearranged via a Mg-dependent methyl migration to produce 3-hydroxy-3-methyl-2-ketobutyrate (HMKB). In the reductase reaction, this 2-ketoacid undergoes a metal-dependent reduction by NADPH to yield (R)-2,3-dihydroxy-isovalerate. This chain is Ketol-acid reductoisomerase (NADP(+)), found in Photorhabdus laumondii subsp. laumondii (strain DSM 15139 / CIP 105565 / TT01) (Photorhabdus luminescens subsp. laumondii).